The chain runs to 142 residues: Nucleoside diphosphate kinase (142 aa).

Residues Lys-11, Phe-59, Arg-87, Thr-93, Arg-104, and Asn-114 each contribute to the ATP site. His-117 acts as the Pros-phosphohistidine intermediate in catalysis.

This sequence belongs to the NDK family. In terms of assembly, homotetramer. Mg(2+) serves as cofactor.

It is found in the cytoplasm. It catalyses the reaction a 2'-deoxyribonucleoside 5'-diphosphate + ATP = a 2'-deoxyribonucleoside 5'-triphosphate + ADP. It carries out the reaction a ribonucleoside 5'-diphosphate + ATP = a ribonucleoside 5'-triphosphate + ADP. Its function is as follows. Major role in the synthesis of nucleoside triphosphates other than ATP. The ATP gamma phosphate is transferred to the NDP beta phosphate via a ping-pong mechanism, using a phosphorylated active-site intermediate. The protein is Nucleoside diphosphate kinase of Yersinia pestis bv. Antiqua (strain Antiqua).